We begin with the raw amino-acid sequence, 424 residues long: Splicing factor 3B subunit 4 (424 aa).

Position 2 is an N-acetylalanine (A2). 2 RRM domains span residues 13–91 and 100–179; these read ATVY…KASA and ANIF…YAFK. Y56 bears the Phosphotyrosine mark. Residues 207–424 are disordered; it reads PHQLFADAPP…RGPLRGPLPQ (218 aa). A compositionally biased stretch (low complexity) spans 222–231; the sequence is NPVVSSLGSG. A compositionally biased stretch (pro residues) spans 232 to 268; sequence LPPPGMPPPGSFPPPVPPPGALPPGIPPAMPPPPMPP. Low complexity-rich tracts occupy residues 269-280 and 303-323; these read GAAGHGPPSAGT and HPGM…GHPH. Pro residues-rich tracts occupy residues 332-381 and 388-424; these read QPPP…PLMP and PPRP…PLPQ.

Belongs to the SF3B4 family. As to quaternary structure, component of the 17S U2 SnRNP complex, a ribonucleoprotein complex that contains small nuclear RNA (snRNA) U2 and a number of specific proteins. Part of the SF3B subcomplex of the 17S U2 SnRNP complex. SF3B associates with the splicing subcomplex SF3A and a 12S RNA unit to form the U2 small nuclear ribonucleoproteins complex (U2 snRNP). SF3B4 has been found in complex spliceosome 'B' and 'C' as well. Component of the minor (U12-type spliceosome) spliceosome. Found in a complex with PRMT9, SF3B2 and SF3B4.

The protein resides in the nucleus. Its function is as follows. Component of the 17S U2 SnRNP complex of the spliceosome, a large ribonucleoprotein complex that removes introns from transcribed pre-mRNAs. The 17S U2 SnRNP complex (1) directly participates in early spliceosome assembly and (2) mediates recognition of the intron branch site during pre-mRNA splicing by promoting the selection of the pre-mRNA branch-site adenosine, the nucleophile for the first step of splicing. Within the 17S U2 SnRNP complex, SF3B4 is part of the SF3B subcomplex, which is required for 'A' complex assembly formed by the stable binding of U2 snRNP to the branchpoint sequence in pre-mRNA. Sequence independent binding of SF3A and SF3B subcomplexes upstream of the branch site is essential, it may anchor U2 snRNP to the pre-mRNA. May also be involved in the assembly of the 'E' complex. Also acts as a component of the minor spliceosome, which is involved in the splicing of U12-type introns in pre-mRNAs. This chain is Splicing factor 3B subunit 4 (SF3B4), found in Homo sapiens (Human).